A 338-amino-acid chain; its full sequence is UDP-glucose 4-epimerase (338 aa).

Residues 11 to 12 (YI), 31 to 36 (DNLCNS), 58 to 59 (DI), 80 to 84 (FAGLK), Asn99, Ser124, Tyr149, Lys153, and Phe178 each bind NAD(+). Substrate is bound by residues Ser124 and Tyr149. Tyr149 (proton acceptor) is an active-site residue. Residues Asn179, 199–200 (NL), 216–218 (SVF), Arg231, and 292–295 (RSGD) each bind substrate.

It belongs to the NAD(P)-dependent epimerase/dehydratase family. In terms of assembly, homodimer. NAD(+) is required as a cofactor.

It carries out the reaction UDP-alpha-D-glucose = UDP-alpha-D-galactose. The protein operates within carbohydrate metabolism; galactose metabolism. In terms of biological role, involved in the metabolism of galactose. Catalyzes the conversion of UDP-galactose (UDP-Gal) to UDP-glucose (UDP-Glc) through a mechanism involving the transient reduction of NAD. By controlling the internal galactose concentration, it may be linked to the biosynthesis of lipopolysaccharide surface molecules, which are important for the pathogenesis of H.influenzae. This Haemophilus influenzae (strain ATCC 51907 / DSM 11121 / KW20 / Rd) protein is UDP-glucose 4-epimerase (galE).